The sequence spans 1480 residues: ABC transporter G family member 49 (1480 aa).

Residues 1 to 18 (MHTTTQATPQKSMVMTTT) show a composition bias toward polar residues. Disordered regions lie at residues 1–42 (MHTT…AGSS), 60–81 (VSGELGGGGGGGGGGREKEDDE), and 104–124 (SSTRGGGSSGDVSEGGGGGAA). Gly residues-rich tracts occupy residues 63–73 (ELGGGGGGGGG) and 107–123 (RGGGSSGDVSEGGGGGA). The 274-residue stretch at 212-485 (LAAKLGFSHH…FESCGFKCPE (274 aa)) folds into the ABC transporter 1 domain. 245–252 (GPPGCGKT) provides a ligand contact to ATP. The ABC transmembrane type-2 1 domain occupies 563–775 (HLLKACFDRE…AEIGLTGNEF (213 aa)). 6 helical membrane passes run 581-601 (FLHITKAVQLGLLAIITGTVF), 619-639 (SLFYALILLMVNGIPELVMSI), 656-676 (GWAYAIPAFILKIPASLVAAL), 699-719 (LLVLFLVHTGALSLYRCVGSY), 725-745 (VGPIAATMSLLVILLFGGFLI), and 811-831 (VAALIGFILLYNIGFAIGLTI). The ABC transporter 2 domain occupies 877–1129 (ISFQDVNYYV…KVIQYFQSIP (253 aa)). 922 to 929 (GVTGAGKT) is an ATP binding site. The 217-residue stretch at 1202–1418 (EQFKACLWKQ…TLNLLFTTQF (217 aa)) folds into the ABC transmembrane type-2 2 domain. 7 helical membrane-spanning segments follow: residues 1226-1246 (IVFMAFSSIIFGVLYWQQGNI), 1254-1274 (GLFTILGCMYGITIFTGINNS), 1311-1331 (IPYVLMLALLFMLIAYPTIGY), 1340-1360 (WFFYTMFCTLLYFVYFGMLIV), 1368-1388 (VASIYASSFYMTQHLLSGFVM), 1396-1416 (WWIWLYYISPMSWTLNLLFTT), and 1449-1469 (LLPLSAIILAAYPVLFAILYG).

Belongs to the ABC transporter superfamily. ABCG family. PDR (TC 3.A.1.205) subfamily.

It is found in the membrane. Functionally, may be a general defense protein. The polypeptide is ABC transporter G family member 49 (Oryza sativa subsp. japonica (Rice)).